Here is a 167-residue protein sequence, read N- to C-terminus: Small ribosomal subunit protein uS5 (167 aa).

The 64-residue stretch at 12–75 (LQEKLIAVNR…EKARRNMVTV (64 aa)) folds into the S5 DRBM domain.

It belongs to the universal ribosomal protein uS5 family. In terms of assembly, part of the 30S ribosomal subunit. Contacts proteins S4 and S8.

In terms of biological role, with S4 and S12 plays an important role in translational accuracy. Its function is as follows. Located at the back of the 30S subunit body where it stabilizes the conformation of the head with respect to the body. This chain is Small ribosomal subunit protein uS5, found in Shewanella sp. (strain W3-18-1).